A 427-amino-acid chain; its full sequence is Gamma-glutamyl phosphate reductase (427 aa).

This sequence belongs to the gamma-glutamyl phosphate reductase family.

The protein resides in the cytoplasm. The enzyme catalyses L-glutamate 5-semialdehyde + phosphate + NADP(+) = L-glutamyl 5-phosphate + NADPH + H(+). It participates in amino-acid biosynthesis; L-proline biosynthesis; L-glutamate 5-semialdehyde from L-glutamate: step 2/2. In terms of biological role, catalyzes the NADPH-dependent reduction of L-glutamate 5-phosphate into L-glutamate 5-semialdehyde and phosphate. The product spontaneously undergoes cyclization to form 1-pyrroline-5-carboxylate. This Brucella canis (strain ATCC 23365 / NCTC 10854 / RM-666) protein is Gamma-glutamyl phosphate reductase.